The chain runs to 25 residues: Hemocyanin subunit 2 (25 aa).

Belongs to the tyrosinase family. Hemocyanin subfamily. As to expression, hemolymph.

It localises to the secreted. The protein resides in the extracellular space. In terms of biological role, hemocyanins are copper-containing oxygen carriers occurring freely dissolved in the hemolymph of many mollusks and arthropods. In Carcinus maenas (Common shore crab), this protein is Hemocyanin subunit 2.